Consider the following 405-residue polypeptide: Phosphoglycerate kinase (405 aa).

Substrate-binding positions include 24–26 (DFN), arginine 40, 63–66 (HLGR), arginine 122, and arginine 162. Residues lysine 213, glutamate 332, and 361-364 (GGDS) each bind ATP.

This sequence belongs to the phosphoglycerate kinase family. As to quaternary structure, monomer.

Its subcellular location is the cytoplasm. It catalyses the reaction (2R)-3-phosphoglycerate + ATP = (2R)-3-phospho-glyceroyl phosphate + ADP. It functions in the pathway carbohydrate degradation; glycolysis; pyruvate from D-glyceraldehyde 3-phosphate: step 2/5. The polypeptide is Phosphoglycerate kinase (Corynebacterium diphtheriae (strain ATCC 700971 / NCTC 13129 / Biotype gravis)).